Reading from the N-terminus, the 189-residue chain is Small ribosomal subunit protein uS5 (189 aa).

An S5 DRBM domain is found at 22 to 85; the sequence is FVDKLVAINR…EAAKRDLIFV (64 aa).

It belongs to the universal ribosomal protein uS5 family. Part of the 30S ribosomal subunit. Contacts proteins S4 and S8.

In terms of biological role, with S4 and S12 plays an important role in translational accuracy. Functionally, located at the back of the 30S subunit body where it stabilizes the conformation of the head with respect to the body. In Sinorhizobium medicae (strain WSM419) (Ensifer medicae), this protein is Small ribosomal subunit protein uS5.